A 314-amino-acid polypeptide reads, in one-letter code: Lysophospholipase D GDPD1 (314 aa).

The Extracellular segment spans residues Met1–Ser3. The helical transmembrane segment at Thr4–Leu24 threads the bilayer. The Cytoplasmic portion of the chain corresponds to Lys25 to Asp195. One can recognise a GP-PDE domain in the interval Ser40 to Leu309. A divalent metal cation contacts are provided by Glu72, Asp74, and His87. The helical transmembrane segment at Ile196 to Leu216 threads the bilayer. At Leu217–Ala314 the chain is on the extracellular side.

This sequence belongs to the glycerophosphoryl diester phosphodiesterase family. Widely expressed.

The protein localises to the cytoplasm. It localises to the membrane. It is found in the perinuclear region. Its subcellular location is the endoplasmic reticulum. It catalyses the reaction 1-hexadecanoyl-sn-glycero-3-phosphocholine + H2O = 1-hexadecanoyl-sn-glycero-3-phosphate + choline + H(+). It carries out the reaction 1-hexadecanoyl-sn-glycero-3-phosphoethanolamine + H2O = 1-hexadecanoyl-sn-glycero-3-phosphate + ethanolamine + H(+). The catalysed reaction is N-hexadecanoyl-sn-glycero-3-phosphoethanolamine + H2O = N-hexadecanoylethanolamine + sn-glycerol 3-phosphate + H(+). The enzyme catalyses N-(5Z,8Z,11Z,14Z-eicosatetraenoyl)-1-(9Z-octadecenoyl)-sn-glycero-3-phosphoethanolamine + H2O = N-(5Z,8Z,11Z,14Z-eicosatetraenoyl)-ethanolamine + 1-(9Z-octadecenoyl)-sn-glycero-3-phosphate + H(+). It catalyses the reaction N,1-di-(9Z-octadecenoyl)-sn-glycero-3-phosphoethanolamine + H2O = N-(9Z-octadecenoyl) ethanolamine + 1-(9Z-octadecenoyl)-sn-glycero-3-phosphate + H(+). It carries out the reaction N-hexadecanoyl-1-(9Z-octadecenoyl)-sn-glycero-3-phosphoethanolamine + H2O = N-hexadecanoylethanolamine + 1-(9Z-octadecenoyl)-sn-glycero-3-phosphate + H(+). The catalysed reaction is a 1-O-alkyl-sn-glycero-3-phosphocholine + H2O = a 1-O-alkyl-sn-glycero-3-phosphate + choline + H(+). The enzyme catalyses 1-O-hexadecyl-sn-glycero-3-phosphocholine + H2O = 1-O-hexadecyl-sn-glycero-3-phosphate + choline + H(+). It catalyses the reaction 1-(9Z-octadecenoyl)-sn-glycero-3-phosphocholine + H2O = 1-(9Z-octadecenoyl)-sn-glycero-3-phosphate + choline + H(+). It carries out the reaction N,1-dihexadecanoyl-sn-glycero-3-phosphoethanolamine + H2O = N-hexadecanoylethanolamine + 1-hexadecanoyl-sn-glycero-3-phosphate + H(+). The catalysed reaction is 1-O-(1Z-octadecenyl)-sn-glycero-3-phospho-(N-5Z,8Z,11Z,14Z-eicosatetraenoyl)-ethanolamine + H2O = 1-O-(1Z-octadecenyl)-sn-glycero-3-phosphate + N-(5Z,8Z,11Z,14Z-eicosatetraenoyl)-ethanolamine + H(+). The enzyme catalyses 1-O-(1Z-octadecenyl)-sn-glycero-3-phospho-(N-9Z-octadecenoyl)-ethanolamine + H2O = 1-O-(1Z-octadecenyl)-sn-glycero-3-phosphate + N-(9Z-octadecenoyl) ethanolamine + H(+). It catalyses the reaction 1-O-(1Z-octadecenyl)-sn-glycero-3-phospho-N-hexadecanoyl-ethanolamine + H2O = 1-O-(1Z-octadecenyl)-sn-glycero-3-phosphate + N-hexadecanoylethanolamine + H(+). Lysophospholipase D activity is increased by magnesium and manganese and inhibited by calcium in a concentration dependent manner. Loss of lysophospholipase D activity by addition of EDTA. Hydrolyzes lysoglycerophospholipids to produce lysophosphatidic acid (LPA) and the corresponding amines. Shows a preference for 1-O-alkyl-sn-glycero-3-phosphocholine (lyso-PAF), lysophosphatidylethanolamine (lyso-PE) and lysophosphatidylcholine (lyso-PC). May be involved in bioactive N-acylethanolamine biosynthesis from both N-acyl-lysoplasmenylethanolamin (N-acyl-lysoPlsEt) and N-acyl-lysophosphatidylethanolamin (N-acyl-lysoPE). In addition, hydrolyzes glycerophospho-N-acylethanolamine to N-acylethanolamine. Does not display glycerophosphodiester phosphodiesterase activity, since it cannot hydrolyze either glycerophosphoinositol or glycerophosphocholine. This Mus musculus (Mouse) protein is Lysophospholipase D GDPD1.